The sequence spans 376 residues: Probable ureide permease A3 (376 aa).

The Extracellular portion of the chain corresponds to 1-9 (HLVESKGGA). A helical membrane pass occupies residues 10–30 (IACMFLALFFLGTWPALLTML). Residues 31 to 41 (ERRGRLPQHTY) are Cytoplasmic-facing. Residues 42 to 62 (LDYSITNFFAALLIAFTFGEI) traverse the membrane as a helical segment. At 63 to 80 (GKGKPDEPNFLAQLAQDN) the chain is on the extracellular side. Residues 81–101 (WPSVLFAMGGGVVLSLGNLSS) form a helical membrane-spanning segment. The Cytoplasmic portion of the chain corresponds to 102–103 (QY). The chain crosses the membrane as a helical span at residues 104-124 (AFAFVGLSVTEVITASITVVI). Residues 125-137 (GTTLNYFLDDKIN) are Extracellular-facing. Residues 138 to 158 (KAEILFPGVGCFLIAVFLGFC) traverse the membrane as a helical segment. Over 159–231 (RFNSSNASDN…RAIKVFGKST (73 aa)) the chain is Cytoplasmic. Residue 223–230 (AIKVFGKS) coordinates ATP. The chain crosses the membrane as a helical span at residues 232 to 252 (LIGLALTFSAGLCFSMFSPAF). Residues 253–274 (NLATNDQWHTLPNGIPHLTVYT) lie on the Extracellular side of the membrane. The chain crosses the membrane as a helical span at residues 275-295 (AFFYFSISCFVIAIILNITFL). Residues 296–317 (YHPVLNLPKSSLKAYLADSDGR) lie on the Cytoplasmic side of the membrane. The chain crosses the membrane as a helical span at residues 318–338 (IWALLAGLLCGFGNSLQFMGG). At 339 to 376 (QAAGYQQQSLCRHFLCKHFWGVLLFGEYRRSSRKTYIC) the chain is on the extracellular side.

This sequence belongs to the plant ureide permease (TC 2.A.7.19) family.

Its subcellular location is the membrane. Functionally, transports a wide spectrum of oxo derivatives of heterocyclic nitrogen compounds. This chain is Probable ureide permease A3 (A3), found in Vigna unguiculata (Cowpea).